Consider the following 69-residue polypeptide: Mitotic-spindle organizing protein 1 (69 aa).

It belongs to the MOZART1 family. As to quaternary structure, part of the gamma-tubulin complex.

It is found in the cytoplasm. The protein localises to the cytoskeleton. The protein resides in the microtubule organizing center. Its subcellular location is the spindle. Its function is as follows. Required for gamma-tubulin complex recruitment to the microtubule organizing centers (MTOCs). This chain is Mitotic-spindle organizing protein 1, found in Picea sitchensis (Sitka spruce).